A 456-amino-acid polypeptide reads, in one-letter code: Probable transcription factor At3g04930 (456 aa).

The segment at 1–71 (MTSDHRDALF…LNSPSTSSLP (71 aa)) is disordered. Acidic residues-rich tracts occupy residues 15-38 (ESPD…DLRD) and 50-62 (AEAE…EEDL). Serine 16 is modified (phosphoserine).

Belongs to the GeBP family.

This is Probable transcription factor At3g04930 from Arabidopsis thaliana (Mouse-ear cress).